We begin with the raw amino-acid sequence, 182 residues long: Organic solute transporter subunit beta (182 aa).

The signal sequence occupies residues 1 to 20 (MSGLLKYLFGCFILCLLLQG). Over 21–64 (KTHMTSATISKPHETIDIEKQNMTGERNSTLAQQLSFPMEDPTN) the chain is Extracellular. Residues N42 and N48 are each glycosylated (N-linked (GlcNAc...) asparagine). Residues 65 to 85 (WNYAILALAFVVLFLAFLILA) traverse the membrane as a helical segment. The Cytoplasmic segment spans residues 86 to 182 (QNSRANRTRK…LYTDSKEDDV (97 aa)).

This sequence belongs to the OST-beta family. In terms of assembly, interacts with slc51a. The Ost-alpha/Ost-beta complex is a heterodimer composed of alpha (slc51a) and beta (slc51b) subunit; may induce the transport of slc51a from the endoplasmic reticulum to the plasma membrane. Expressed in liver.

Its subcellular location is the cell membrane. Its function is as follows. Essential component of the Ost-alpha/Ost-beta complex, a heterodimer that acts as the intestinal basolateral transporter responsible for bile acid export from enterocytes into portal blood. Efficiently transports the major species of bile acids. May modulate slc51a glycosylation, membrane trafficking and stability activities. Able to transport taurocholate, estrone sulfate, digoxin, and prostaglandin E(2), but not p-aminohippurate or S-dinitrophenyl glutathione. The chain is Organic solute transporter subunit beta (slc51b) from Leucoraja erinaceus (Little skate).